Reading from the N-terminus, the 471-residue chain is UDP-N-acetylmuramate--L-alanine ligase (471 aa).

112–118 (GTHGKTT) contacts ATP.

The protein belongs to the MurCDEF family.

The protein localises to the cytoplasm. The catalysed reaction is UDP-N-acetyl-alpha-D-muramate + L-alanine + ATP = UDP-N-acetyl-alpha-D-muramoyl-L-alanine + ADP + phosphate + H(+). The protein operates within cell wall biogenesis; peptidoglycan biosynthesis. Functionally, cell wall formation. The protein is UDP-N-acetylmuramate--L-alanine ligase of Cupriavidus metallidurans (strain ATCC 43123 / DSM 2839 / NBRC 102507 / CH34) (Ralstonia metallidurans).